Here is a 786-residue protein sequence, read N- to C-terminus: Endonuclease MutS2 (786 aa).

335 to 342 lines the ATP pocket; sequence GPNTGGKT. Residues 711–786 form the Smr domain; the sequence is LDLRGERFEN…GLGVTVVELK (76 aa).

Belongs to the DNA mismatch repair MutS family. MutS2 subfamily. Homodimer. Binds to stalled ribosomes, contacting rRNA.

Its function is as follows. Endonuclease that is involved in the suppression of homologous recombination and thus may have a key role in the control of bacterial genetic diversity. Acts as a ribosome collision sensor, splitting the ribosome into its 2 subunits. Detects stalled/collided 70S ribosomes which it binds and splits by an ATP-hydrolysis driven conformational change. Acts upstream of the ribosome quality control system (RQC), a ribosome-associated complex that mediates the extraction of incompletely synthesized nascent chains from stalled ribosomes and their subsequent degradation. Probably generates substrates for RQC. This Bacillus cereus (strain Q1) protein is Endonuclease MutS2.